We begin with the raw amino-acid sequence, 232 residues long: Demethylmenaquinone methyltransferase (232 aa).

S-adenosyl-L-methionine contacts are provided by residues T58, D79, and 104–105 (NA).

Belongs to the class I-like SAM-binding methyltransferase superfamily. MenG/UbiE family.

It carries out the reaction a 2-demethylmenaquinol + S-adenosyl-L-methionine = a menaquinol + S-adenosyl-L-homocysteine + H(+). It functions in the pathway quinol/quinone metabolism; menaquinone biosynthesis; menaquinol from 1,4-dihydroxy-2-naphthoate: step 2/2. Methyltransferase required for the conversion of demethylmenaquinol (DMKH2) to menaquinol (MKH2). This chain is Demethylmenaquinone methyltransferase, found in Bacillus licheniformis (strain ATCC 14580 / DSM 13 / JCM 2505 / CCUG 7422 / NBRC 12200 / NCIMB 9375 / NCTC 10341 / NRRL NRS-1264 / Gibson 46).